Reading from the N-terminus, the 623-residue chain is Sphingomyelinase C 2 (623 aa).

Residues 1–25 form the signal peptide; sequence MINKITKPKLLIGYYLLLFSLIRCL. Composition is skewed to low complexity over residues 51–61 and 67–80; these read VNSVSINNDPA and NPAS…NAVP. Positions 51–121 are disordered; sequence VNSVSINNDP…DPNPANLASA (71 aa). The span at 89-102 shows a compositional bias: polar residues; the sequence is NPVNPASANSNQVN. A compositionally biased stretch (low complexity) spans 110–121; the sequence is PADPNPANLASA.

The protein localises to the secreted. The catalysed reaction is a sphingomyelin + H2O = phosphocholine + an N-acylsphing-4-enine + H(+). This Leptospira interrogans serogroup Icterohaemorrhagiae serovar Lai (strain 56601) protein is Sphingomyelinase C 2 (sph2).